A 354-amino-acid polypeptide reads, in one-letter code: Allantoicase (354 aa).

Belongs to the allantoicase family.

The catalysed reaction is allantoate + H2O = (S)-ureidoglycolate + urea. It functions in the pathway nitrogen metabolism; (S)-allantoin degradation; (S)-ureidoglycolate from allantoate (aminidohydrolase route): step 1/1. In terms of biological role, utilization of purines as secondary nitrogen sources, when primary sources are limiting. In Neurospora crassa (strain ATCC 24698 / 74-OR23-1A / CBS 708.71 / DSM 1257 / FGSC 987), this protein is Allantoicase (alc-1).